Consider the following 563-residue polypeptide: Nigrin b (563 aa).

The first 25 residues, 1–25 (MRVVAAAMLYFYIVVLAICSVGIQG), serve as a signal peptide directing secretion. Glu188 is a catalytic residue. Residue Asn221 is glycosylated (N-linked (GlcNAc...) asparagine). 3 cysteine pairs are disulfide-bonded: Cys274–Cys302, Cys319–Cys338, and Cys360–Cys377. Ricin B-type lectin domains are found at residues 305–431 (RTSF…WTVT) and 434–559 (VKPI…WVTQ). The 1-alpha repeat unit spans residues 316 to 356 (DGLCVDVRNGYDTDGTPLQLWPCGTQRNQRWTFDSDDTIRS). A 1-beta repeat occupies 357–397 (MGKCMTANGLNNGSNIVIFNCSTAAENAIKWEVPIDGSIIN). N-linked (GlcNAc...) asparagine glycans are attached at residues Asn368 and Asn376. One copy of the 1-gamma repeat lies at 400 to 432 (SGLVMTAPRAASRTILLLEDNIYAASQGWTVTN). One copy of the 2-alpha repeat lies at 445-482 (KEMCLQSNGENNGVWMEDCEATSLQQQWALYGDRTIRV). Cys448 and Cys463 are oxidised to a cystine. An N-linked (GlcNAc...) asparagine glycan is attached at Asn483. One copy of the 2-beta repeat lies at 486–524 (RGLCVTTNGYNSKDLIIILKCQGLPSQRWFFNSDGAIVN). Cysteines 489 and 506 form a disulfide. The stretch at 527–554 (SRHVMDVRASNVSLREIIIFPATGNPNQ) is one 2-gamma repeat. Asn537 carries an N-linked (GlcNAc...) asparagine glycan.

It in the N-terminal section; belongs to the ribosome-inactivating protein family. Type 2 RIP subfamily. Disulfide-linked dimer of A and B chains.

It catalyses the reaction Endohydrolysis of the N-glycosidic bond at one specific adenosine on the 28S rRNA.. Non-toxic type 2 RIP which strongly inhibits mammalian protein synthesis but does not affect plant nor bacterial protein synthesis. The A chain is responsible for inhibiting protein synthesis through the catalytic inactivation of 60S ribosomal subunits by removing adenine from position 4,324 of 28S rRNA. In terms of biological role, the B chain is a galactose-specific lectin that facilitates the binding of nigrin b to the cell membrane that precedes endocytosis. In Sambucus nigra (European elder), this protein is Nigrin b.